The sequence spans 578 residues: Membrane protein insertase YidC (578 aa).

A helical membrane pass occupies residues 3–23 (IQRSILIVALAVVSYLLVLQW). The tract at residues 34 to 72 (AASASMNTTQGLPDTPSASGTSSDVPTAQSSAAGSEAAD) is disordered. A compositionally biased stretch (polar residues) spans 37 to 66 (ASMNTTQGLPDTPSASGTSSDVPTAQSSAA). Transmembrane regions (helical) follow at residues 361–381 (LELT…FWLL), 387–407 (LIGN…LAFF), 457–477 (LGGC…YWVL), 500–520 (PFFI…MLNP), and 535–555 (PIIF…YWVV).

This sequence belongs to the OXA1/ALB3/YidC family. Type 1 subfamily. As to quaternary structure, interacts with the Sec translocase complex via SecD. Specifically interacts with transmembrane segments of nascent integral membrane proteins during membrane integration.

It is found in the cell inner membrane. Required for the insertion and/or proper folding and/or complex formation of integral membrane proteins into the membrane. Involved in integration of membrane proteins that insert both dependently and independently of the Sec translocase complex, as well as at least some lipoproteins. Aids folding of multispanning membrane proteins. The protein is Membrane protein insertase YidC of Pseudomonas aeruginosa (strain ATCC 15692 / DSM 22644 / CIP 104116 / JCM 14847 / LMG 12228 / 1C / PRS 101 / PAO1).